The sequence spans 69 residues: uncharacterized protein (69 aa).

Topologically, residues 1-15 are cytoplasmic; it reads MLLYIVIIVACIISK. Residues 16 to 36 traverse the membrane as a helical segment; sequence LVPNEYWAIHLFFIIMIFMVY. The Extracellular segment spans residues 37–69; it reads MYEKLDIHQKYQFWNYTMSGLSGHNVQITCKCY. Residue N51 is glycosylated (N-linked (GlcNAc...) asparagine; by host).

Belongs to the asfivirus X69R family.

Its subcellular location is the host membrane. This is an uncharacterized protein from Ornithodoros (relapsing fever ticks).